The sequence spans 230 residues: Exosome complex component Rrp4 (230 aa).

One can recognise an S1 motif domain in the interval 60-129 (NDKVIGKVID…EIKESWLSLK (70 aa)). A KH domain is found at 137–195 (EEGSIIYIKAPKVPRVIGKAGNMINMIKSETNTKIIVGQNGLIWIDGEPENVDLAINAI).

This sequence belongs to the RRP4 family. As to quaternary structure, component of the archaeal exosome complex. Forms a trimer of Rrp4 and/or Csl4 subunits. The trimer associates with a hexameric ring-like arrangement composed of 3 Rrp41-Rrp42 heterodimers.

Its subcellular location is the cytoplasm. Non-catalytic component of the exosome, which is a complex involved in RNA degradation. Increases the RNA binding and the efficiency of RNA degradation. Confers strong poly(A) specificity to the exosome. This chain is Exosome complex component Rrp4, found in Picrophilus torridus (strain ATCC 700027 / DSM 9790 / JCM 10055 / NBRC 100828 / KAW 2/3).